A 189-amino-acid polypeptide reads, in one-letter code: NADH-quinone oxidoreductase subunit B (189 aa).

Positions 39, 40, 104, and 135 each coordinate [4Fe-4S] cluster.

This sequence belongs to the complex I 20 kDa subunit family. As to quaternary structure, NDH-1 is composed of 14 different subunits. Subunits NuoB, C, D, E, F, and G constitute the peripheral sector of the complex. [4Fe-4S] cluster is required as a cofactor.

It localises to the cell inner membrane. It carries out the reaction a quinone + NADH + 5 H(+)(in) = a quinol + NAD(+) + 4 H(+)(out). Functionally, NDH-1 shuttles electrons from NADH, via FMN and iron-sulfur (Fe-S) centers, to quinones in the respiratory chain. The immediate electron acceptor for the enzyme in this species is believed to be a menaquinone. Couples the redox reaction to proton translocation (for every two electrons transferred, four hydrogen ions are translocated across the cytoplasmic membrane), and thus conserves the redox energy in a proton gradient. This is NADH-quinone oxidoreductase subunit B from Chlorobium phaeobacteroides (strain DSM 266 / SMG 266 / 2430).